The chain runs to 543 residues: Probable bifunctional tRNA threonylcarbamoyladenosine biosynthesis protein (543 aa).

Residues 1-329 (MDISKDLICI…YRSDMVEVNW (329 aa)) are kae1. Residues His112, His116, and Tyr133 each coordinate Fe cation. L-threonylcarbamoyladenylate is bound by residues 133–137 (YVSGG), Asp165, Gly178, Glu182, and Asn262. Asp290 contacts Fe cation. Residues 342–543 (IIPEHLIGKG…KEVEKRARYL (202 aa)) form the Protein kinase domain. ATP contacts are provided by residues 348–356 (IGKGAEADI) and Lys369. Asp461 acts as the Proton acceptor; for kinase activity in catalysis.

In the N-terminal section; belongs to the KAE1 / TsaD family. This sequence in the C-terminal section; belongs to the protein kinase superfamily. Tyr protein kinase family. BUD32 subfamily. As to quaternary structure, component of the KEOPS complex that consists of Kae1, Bud32, Cgi121 and Pcc1; the whole complex dimerizes. Requires Fe(2+) as cofactor.

The protein resides in the cytoplasm. It carries out the reaction L-seryl-[protein] + ATP = O-phospho-L-seryl-[protein] + ADP + H(+). It catalyses the reaction L-threonyl-[protein] + ATP = O-phospho-L-threonyl-[protein] + ADP + H(+). The enzyme catalyses L-threonylcarbamoyladenylate + adenosine(37) in tRNA = N(6)-L-threonylcarbamoyladenosine(37) in tRNA + AMP + H(+). In terms of biological role, required for the formation of a threonylcarbamoyl group on adenosine at position 37 (t(6)A37) in tRNAs that read codons beginning with adenine. Is a component of the KEOPS complex that is probably involved in the transfer of the threonylcarbamoyl moiety of threonylcarbamoyl-AMP (TC-AMP) to the N6 group of A37. The Kae1 domain likely plays a direct catalytic role in this reaction. The Bud32 domain probably displays kinase activity that regulates Kae1 function. In Methanococcus maripaludis (strain C6 / ATCC BAA-1332), this protein is Probable bifunctional tRNA threonylcarbamoyladenosine biosynthesis protein.